A 729-amino-acid chain; its full sequence is U-box domain-containing protein 17 (729 aa).

The region spanning 304–378 is the U-box domain; that stretch reads TVPKDFVCPI…VQWCTASGIS (75 aa). ARM repeat units follow at residues 438–477, 479–520, 523–562, and 564–601; these read KENR…NLSI, EKNK…SLSA, EYKK…NLST, and PDNC…LLVR.

It carries out the reaction S-ubiquitinyl-[E2 ubiquitin-conjugating enzyme]-L-cysteine + [acceptor protein]-L-lysine = [E2 ubiquitin-conjugating enzyme]-L-cysteine + N(6)-ubiquitinyl-[acceptor protein]-L-lysine.. It functions in the pathway protein modification; protein ubiquitination. Functions as an E3 ubiquitin ligase. This chain is U-box domain-containing protein 17 (PUB17), found in Arabidopsis thaliana (Mouse-ear cress).